A 148-amino-acid chain; its full sequence is 3-dehydroquinate dehydratase (148 aa).

Tyrosine 23 functions as the Proton acceptor in the catalytic mechanism. 3 residues coordinate substrate: asparagine 75, histidine 81, and aspartate 88. Residue histidine 101 is the Proton donor of the active site. Substrate is bound by residues 102-103 (LS) and arginine 112.

This sequence belongs to the type-II 3-dehydroquinase family. As to quaternary structure, homododecamer.

The catalysed reaction is 3-dehydroquinate = 3-dehydroshikimate + H2O. The protein operates within metabolic intermediate biosynthesis; chorismate biosynthesis; chorismate from D-erythrose 4-phosphate and phosphoenolpyruvate: step 3/7. Catalyzes a trans-dehydration via an enolate intermediate. The sequence is that of 3-dehydroquinate dehydratase from Xanthomonas oryzae pv. oryzae (strain MAFF 311018).